A 201-amino-acid chain; its full sequence is Heat shock protein beta-1 (201 aa).

A Phosphoserine; by PKA and PKC modification is found at Ser-15. The sHSP domain occupies Ala-83–Glu-193.

This sequence belongs to the small heat shock protein (HSP20) family. In terms of assembly, homooligomer. Homodimer; becomes monomeric upon activation. Heterooligomer.

Its subcellular location is the cytoplasm. The protein resides in the nucleus. It localises to the cytoskeleton. The protein localises to the spindle. Functionally, small heat shock protein which functions as a molecular chaperone probably maintaining denatured proteins in a folding-competent state. Plays a role in stress resistance and actin organization. In Poeciliopsis lucida (Desert topminnow), this protein is Heat shock protein beta-1 (hspb1).